A 593-amino-acid polypeptide reads, in one-letter code: DNA primase (593 aa).

Residues 38-62 (CPFHQEKTPSFTVSDSKRFFYCFGC) form a CHC2-type zinc finger. In terms of domain architecture, Toprim spans 250 to 332 (NRSILVEGYF…EKKISFIRLP (83 aa)). Positions 256, 300, and 302 each coordinate Mg(2+).

Belongs to the DnaG primase family. As to quaternary structure, monomer. Interacts with DnaB. Zn(2+) serves as cofactor. Mg(2+) is required as a cofactor.

The enzyme catalyses ssDNA + n NTP = ssDNA/pppN(pN)n-1 hybrid + (n-1) diphosphate.. Functionally, RNA polymerase that catalyzes the synthesis of short RNA molecules used as primers for DNA polymerase during DNA replication. The polypeptide is DNA primase (Rickettsia prowazekii (strain Madrid E)).